The sequence spans 94 residues: MTKSELIELLAKKNPSISTKIVENSVKEILEQMSGSLENSDRIEIRGFGSFSLHYRQPRLGRNPKTGESVKLDAKCVPHFKAGKELKERVDFKA.

This sequence belongs to the bacterial histone-like protein family. In terms of assembly, heterodimer of an alpha and a beta chain.

Functionally, this protein is one of the two subunits of integration host factor, a specific DNA-binding protein that functions in genetic recombination as well as in transcriptional and translational control. In Actinobacillus succinogenes (strain ATCC 55618 / DSM 22257 / CCUG 43843 / 130Z), this protein is Integration host factor subunit beta.